Here is a 182-residue protein sequence, read N- to C-terminus: Troponin I, fast skeletal muscle (182 aa).

N-acetylglycine is present on Gly-2. The interval 2–48 is involved in binding TNC; it reads GDEEKRNRAITARRQHLKSVMLQIAATELEKEESRRESEKENYLSEH. The residue at position 12 (Thr-12) is a Phosphothreonine. The segment covering 29–45 has biased composition (basic and acidic residues); it reads ELEKEESRRESEKENYL. Residues 29–53 are disordered; it reads ELEKEESRRESEKENYLSEHCPPLH. An involved in binding TNC and actin region spans residues 97–117; that stretch reads NQKLFDLRGKFKRPPLRRVRM. Ser-118 is modified (phosphoserine).

Belongs to the troponin I family. As to quaternary structure, binds to actin and tropomyosin.

Functionally, troponin I is the inhibitory subunit of troponin, the thin filament regulatory complex which confers calcium-sensitivity to striated muscle actomyosin ATPase activity. This Mus musculus (Mouse) protein is Troponin I, fast skeletal muscle (Tnni2).